Consider the following 107-residue polypeptide: Ig kappa chain V region 4135 (107 aa).

The tract at residues 1-24 is framework-1; the sequence is ADIVMTQTPASVSEPVGGTVTIKC. The interval 25 to 35 is complementarity-determining-1; it reads QTSQSIDDYLS. The tract at residues 36-50 is framework-2; sequence WYQQKPGQPPKGLIY. The segment at 51-57 is complementarity-determining-2; the sequence is RASTLAS. Residues 58 to 89 form a framework-3 region; it reads GVPSRFRGSGSGTDFTLTISDLECADAATYYC. The segment at 90–96 is complementarity-determining-3; sequence QSTYGVG. Residues 97 to 106 are framework-4; that stretch reads FGGGTEVVVK.

The polypeptide is Ig kappa chain V region 4135 (Oryctolagus cuniculus (Rabbit)).